A 908-amino-acid chain; its full sequence is Disease resistance protein RPP8 (908 aa).

Residues 15-57 are a coiled coil; the sequence is DLLSRESERLQGIDGQLDGLKRQLRSLQSLLKDADAKKHGSDR. An NB-ARC domain is found at 146–459; that stretch reads RQRVQREIRQ…AEGIYDGSTI (314 aa). Residue 192 to 199 coordinates ATP; sequence GMGGIGKT. LRR repeat units lie at residues 575 to 600, 601 to 623, 648 to 673, 693 to 718, 722 to 746, 748 to 770, 793 to 820, 842 to 867, and 882 to 905; these read LTLLRVLDLSWVKFEGGKLPCSIGGL, IHLRYLSLYEAKVSHLPSTMRNL, MIQLRYLSLPLKMDDKTKLELGDLVN, MTKLRYLAVSLSERCNFETLSSSLRE, LETLNFLFSLETYMVDYMGEFVLDH, IHLKQLGLAVRMSKIPDQHQFPP, LLHLKSVRLARKAFLGSRMVCSKGGFPQ, MPCLRTLTIDDCKKLKELPDGLKYIT, and KEKLVPGGEDYYKVQHIPDVQFIN.

The protein belongs to the disease resistance NB-LRR family. RPP8/HRT subfamily. In terms of assembly, interacts with the NAC protein TIP. Interacts with MORC1/CRT1. Interacts with COP1 and is subsequently degraded in a 26s proteasome dependent manner. In terms of tissue distribution, mostly expressed in leaves, and, to a lower extent, in roots.

It is found in the cell membrane. Disease resistance protein. Resistance proteins guard the plant against pathogens that contain an appropriate avirulence protein via an indirect interaction with this avirulence protein. That triggers a defense system including the hypersensitive response, which restricts the pathogen growth. The interaction with TIP (TCV-interacting protein) may be essential for the recognition of the avirulence proteins, and the triggering of the defense response. Triggers resistance to turnip crinkle virus (TCV) via a SAG101-dependent pathway. In Arabidopsis thaliana (Mouse-ear cress), this protein is Disease resistance protein RPP8 (RPP8).